Here is a 116-residue protein sequence, read N- to C-terminus: MSEKLESQTCTPCRGGIPPLERAEAEALLVETPGWTLADDAGRLERSFTFRNFAQALEFVSGVGRLAEEQGHHPEISFGWGHATVSWRTKKIKGLHRNDFVMAAKTSELAAGMTQG.

This sequence belongs to the pterin-4-alpha-carbinolamine dehydratase family.

It catalyses the reaction (4aS,6R)-4a-hydroxy-L-erythro-5,6,7,8-tetrahydrobiopterin = (6R)-L-erythro-6,7-dihydrobiopterin + H2O. The sequence is that of Putative pterin-4-alpha-carbinolamine dehydratase 1 from Cupriavidus pinatubonensis (strain JMP 134 / LMG 1197) (Cupriavidus necator (strain JMP 134)).